Consider the following 1394-residue polypeptide: Coiled-coil domain-containing protein 7 (1394 aa).

Residues 308–340 (LLDAEYKQIQRDFELLSEEKLVLENELQKLKDT) adopt a coiled-coil conformation. Residues 345-375 (STNNRTKKAAKTVKKKDKGKSEDSEKKMSSE) are disordered. Basic residues predominate over residues 349-362 (RTKKAAKTVKKKDK). The segment covering 363 to 375 (GKSEDSEKKMSSE) has biased composition (basic and acidic residues). A coiled-coil region spans residues 383 to 421 (LDQVQKVARLEIENKVLQEQLKQALQEAEKAKHQLNYFL). 3 disordered regions span residues 431-617 (EGKT…EVPD), 634-806 (EQMK…LEHQ), and 819-842 (NEKL…PMLK). The segment covering 437-446 (TMRVGNSQTE) has biased composition (polar residues). Residues 447–462 (VKGEDSKTIPLEKETG) are compositionally biased toward basic and acidic residues. The segment covering 464–473 (SLVSDSGGQK) has biased composition (polar residues). The segment covering 491-500 (LIEKSSEKKR) has biased composition (basic and acidic residues). Composition is skewed to polar residues over residues 503–513 (PAISDLSQILK), 521–538 (LESS…NKSP), and 546–571 (LTTV…NETV). The span at 583-600 (ESKKADVSEEQLQKKTEE) shows a compositional bias: basic and acidic residues. Positions 663 to 679 (SRSQSETKNLEATGNES) are enriched in polar residues. Positions 695-707 (QDTKSKTEVEVKK) are enriched in basic and acidic residues. A compositionally biased stretch (polar residues) spans 711 to 721 (FQDNQLNTHNE). The segment covering 722-736 (VPNERLIVEHQESMS) has biased composition (basic and acidic residues). Over residues 780-790 (KEQSTLKGQRI) the composition is skewed to polar residues. 2 stretches are compositionally biased toward basic and acidic residues: residues 791–806 (TTHE…LEHQ) and 830–842 (THGE…PMLK).

May play a role in tumorigenesis. This Macaca fascicularis (Crab-eating macaque) protein is Coiled-coil domain-containing protein 7 (CCDC7).